The sequence spans 185 residues: CASP-like protein 2C3 (185 aa).

The Cytoplasmic segment spans residues 1–13 (MAAAARVSEVKAE). A helical transmembrane segment spans residues 14 to 34 (GLLRGACAALAAAAALLVGLS). Over 35 to 53 (TQTETVLLVRKKATVKDVQ) the chain is Extracellular. A helical transmembrane segment spans residues 54-74 (ALWVLAMAAAAAAGYHLLQLL). Over 75–104 (KCLYLGRVGGARPCRRSSRALAWTCLLLDK) the chain is Cytoplasmic. A helical membrane pass occupies residues 105-125 (ACAYTTFATTVAAAQACVVAL). Residues 126–146 (DGAHAVQWTKLCNIYTRFCEQ) lie on the Extracellular side of the membrane. The chain crosses the membrane as a helical span at residues 147–167 (VAGSLVLGMLAAVGTAVLSAA). Topologically, residues 168 to 185 (SARNVFRHYSSLETYAAH) are cytoplasmic.

It belongs to the Casparian strip membrane proteins (CASP) family. Homodimer and heterodimers.

It is found in the cell membrane. The chain is CASP-like protein 2C3 from Zea mays (Maize).